The following is a 532-amino-acid chain: Beta-hexosaminidase subunit A1 (532 aa).

The N-terminal stretch at 1-18 is a signal peptide; sequence MIKKIILFFAVLIAIVIG. N-linked (GlcNAc...) asparagine glycans are attached at residues Asn-72 and Asn-79. The active-site Proton donor is Glu-308. N-linked (GlcNAc...) asparagine glycans are attached at residues Asn-350 and Asn-427.

Belongs to the glycosyl hydrolase 20 family. Dimer. Post-translationally, the N-terminus is blocked. N-glycosylated.

It is found in the lysosome. The catalysed reaction is Hydrolysis of terminal non-reducing N-acetyl-D-hexosamine residues in N-acetyl-beta-D-hexosaminides.. In terms of biological role, responsible for the degradation of GM2 gangliosides, and a variety of other molecules containing terminal N-acetyl hexosamines. This enzyme plays a role during the slug stage of development in the maintenance of pseudoplasmodia of normal size. The sequence is that of Beta-hexosaminidase subunit A1 (hexa1) from Dictyostelium discoideum (Social amoeba).